A 198-amino-acid polypeptide reads, in one-letter code: Uracil phosphoribosyltransferase homolog (198 aa).

The protein belongs to the UPRTase family.

Its subcellular location is the plastid. The protein localises to the chloroplast. The chain is Uracil phosphoribosyltransferase homolog from Pyropia yezoensis (Susabi-nori).